The following is a 452-amino-acid chain: Phosphatidylserine synthase 2 (452 aa).

At 1 to 35 (MAKGEWKRSGADDLPLPGRSECEVFDDGTNTFFWR) the chain is on the cytoplasmic side. A helical membrane pass occupies residues 36–56 (AHTVTVLFILTCALVYVTLLE). Topologically, residues 57-69 (ETPHDTAYNTKRG) are lumenal. A helical transmembrane segment spans residues 70–90 (IVASILVFLCFGVTQAKDGPF). The Cytoplasmic segment spans residues 91–99 (TRPHPAYWR). The chain crosses the membrane as a helical span at residues 100-120 (FWLCVSVVYELFLIFILFQTV). The Lumenal portion of the chain corresponds to 121–286 (HDGRQFMKYI…EWRPASNLRR (166 aa)). Residues 287-307 (WLAVLGIIFMFLLAELNTFYL) form a helical membrane-spanning segment. Position 308 (lysine 308) is a topological domain, cytoplasmic. The chain crosses the membrane as a helical span at residues 309–329 (FVMWMPPEHYLVLFRLVFFVN). Topologically, residues 330 to 349 (VGGVAMREIYDFMDDPKFHK) are lumenal. The chain crosses the membrane as a helical span at residues 350 to 370 (KLGQQAWIVAAITVTEFLIVV). At 371 to 376 (KYDPNT) the chain is on the cytoplasmic side. The chain crosses the membrane as a helical span at residues 377–397 (IMLPIPFFITQCWILGIALIL). The Lumenal segment spans residues 398-452 (VWTLWRFFIRDITLRYKETRRRRQEVSSERDGSSSAPSGRSKLNGSMDSVRHRKS). The interval 419 to 452 (RRQEVSSERDGSSSAPSGRSKLNGSMDSVRHRKS) is disordered. Positions 430–444 (SSSAPSGRSKLNGSM) are enriched in polar residues.

This sequence belongs to the phosphatidyl serine synthase family.

It localises to the endoplasmic reticulum membrane. The catalysed reaction is a 1,2-diacyl-sn-glycero-3-phosphoethanolamine + L-serine = a 1,2-diacyl-sn-glycero-3-phospho-L-serine + ethanolamine. The enzyme catalyses 1-hexadecanoyl-2-(9Z-octadecenoyl)-sn-glycero-3-phosphoethanolamine + L-serine = 1-hexadecanoyl-2-(9Z-octadecenoyl)-sn-glycero-3-phospho-L-serine + ethanolamine. It catalyses the reaction 1-hexadecanoyl-2-(4Z,7Z,10Z,13Z,16Z,19Z-docosahexaenoyl)-sn-glycero-3-phosphoethanolamine + L-serine = 1-hexadecanoyl-2-(4Z,7Z,10Z,13Z,16Z,19Z-docosahexaenoyl)-sn-glycero-3-phosphoserine + ethanolamine. It carries out the reaction 1-octadecanoyl-2-(5Z,8Z,11Z,14Z)-eicosatetraenoyl-sn-glycero-3-phosphoethanolamine + L-serine = 1-octadecanoyl-2-(5Z,8Z,11Z,14Z)-eicosatetraenoyl-sn-glycero-3-phosphoserine + ethanolamine. The catalysed reaction is 1-octadecanoyl-2-(4Z,7Z,10Z,13Z,16Z,19Z-docosahexaenoyl)-sn-glycero-3-phosphoethanolamine + L-serine = 1-octadecanoyl-2-(4Z,7Z,10Z,13Z,16Z,19Z-docosahexaenoyl)-sn-glycero-3-phosphoserine + ethanolamine. The enzyme catalyses 1-(1Z-octadecenyl)-2-(4Z,7Z,10Z,13Z,16Z,19Z-docosahexaenoyl)-sn-glycero-3-phosphoethanolamine + L-serine = 1-(1Z-octadecenyl)-2-(4Z,7Z,10Z,13Z,16Z,19Z-docosahexaenoyl)-sn-glycero-3-phospho-L-serine + ethanolamine. It catalyses the reaction 1-octadecanoyl-2-(9Z-octadecenoyl)-sn-glycero-3-phosphoethanolamine + L-serine = 1-octadecanoyl-2-(9Z-octadecenoyl)-sn-glycero-3-phospho-L-serine + ethanolamine. It carries out the reaction 1-(1Z-octadecenyl)-2-(9Z-octadecenoyl)-sn-glycero-3-phosphoethanolamine + L-serine = 1-(1Z-octadecenyl)-2-(9Z-octadecenoyl)-sn-glycero-3-phospho-L-serine + ethanolamine. The catalysed reaction is 1-(1Z-octadecenyl)-2-(5Z,8Z,11Z,14Z- eicosatetraenoyl)-sn-glycero-3-phosphoethanolamine + L-serine = 1-(1Z-octadecenyl)-2-(5Z,8Z,11Z,14Z-eicosatetraenoyl)-sn-glycero-3-phospho-L-serine + ethanolamine. Its pathway is phospholipid metabolism; phosphatidylserine biosynthesis. In terms of biological role, catalyzes a base-exchange reaction in which the polar head group of phosphatidylethanolamine (PE) or phosphatidylcholine (PC) is replaced by L-serine. Catalyzes the conversion of phosphatatidylethanolamine and does not act on phosphatidylcholine. Can utilize both phosphatidylethanolamine (PE) plasmalogen and diacyl PE as substrate and the latter is six times better utilized, indicating the importance of an ester linkage at the sn-1 position. Although it shows no sn-1 fatty acyl preference, exhibits significant preference towards docosahexaenoic acid (22:6n-3) compared with 18:1 or 20:4 at the sn-2 position. This chain is Phosphatidylserine synthase 2 (ptdss2), found in Danio rerio (Zebrafish).